The chain runs to 510 residues: JmjC domain-containing histone demethylation protein 1 (510 aa).

A PHD-type zinc finger spans residues 2–53 (PNRCDFCTSSSTKDKQQWTQCDGCDRWVHDVCVSITDPVSYAKYHCPTCTKT). Residues 216 to 365 (TLVRELDLVD…TQIDIAGIEV (150 aa)) enclose the JmjC domain. Thr-255 lines the substrate pocket. Residues His-258 and Asp-260 each contribute to the Fe cation site. Lys-275 is a substrate binding site. His-333 serves as a coordination point for Fe cation. The tract at residues 475–510 (KGESKEKHKIESQLPEEKILQGSKLESKEEVQTENF) is disordered. Positions 477-510 (ESKEKHKIESQLPEEKILQGSKLESKEEVQTENF) are enriched in basic and acidic residues.

It belongs to the JHDM1 histone demethylase family. Requires Fe(2+) as cofactor.

The protein localises to the nucleus. The enzyme catalyses N(6),N(6)-dimethyl-L-lysyl(36)-[histone H3] + 2 2-oxoglutarate + 2 O2 = L-lysyl(36)-[histone H3] + 2 formaldehyde + 2 succinate + 2 CO2. Its function is as follows. Histone demethylase that specifically demethylates 'Lys-36' of histone H3, thereby playing a central role in histone code. The protein is JmjC domain-containing histone demethylation protein 1 (JHD1) of Yarrowia lipolytica (strain CLIB 122 / E 150) (Yeast).